Reading from the N-terminus, the 112-residue chain is Protein Churchill (112 aa).

Zn(2+) contacts are provided by Cys2, Cys5, Cys30, Cys33, His59, Cys61, Cys64, His66, His71, Cys88, and Cys91.

This sequence belongs to the Churchill family.

Functionally, transcriptional activator that mediates FGF signaling during neural development. Plays a role in the regulation of cell movement. Does not bind DNA by itself. The polypeptide is Protein Churchill (churc1) (Xenopus laevis (African clawed frog)).